The sequence spans 34 residues: Mytilin-A (34 aa).

4 disulfide bridges follow: Cys2–Cys27, Cys6–Cys29, Cys10–Cys31, and Cys15–Cys34.

The protein localises to the secreted. Functionally, has antibacterial activity against A.viridans, B.megaterium, M.luteus, E.faecalis, S.aureus and E.coli. It is active against the marine species A.carrageenovora, P.alginovora and C.drobachiensis. This chain is Mytilin-A, found in Mytilus edulis (Blue mussel).